A 147-amino-acid polypeptide reads, in one-letter code: Austinoid biosynthesis cluster protein H (147 aa).

Belongs to the trt14 isomerase family. Homodimer.

The protein operates within secondary metabolite biosynthesis; terpenoid biosynthesis. Functionally, part of the gene cluster that mediates the biosynthesis of calidodehydroaustin, a fungal meroterpenoid. The first step of the pathway is the synthesis of 3,5-dimethylorsellinic acid by the polyketide synthase ausA. 3,5-dimethylorsellinic acid is then prenylated by the polyprenyl transferase ausN. Further epoxidation by the FAD-dependent monooxygenase ausM and cyclization by the probable terpene cyclase ausL lead to the formation of protoaustinoid A. Protoaustinoid A is then oxidized to spiro-lactone preaustinoid A3 by the combined action of the FAD-binding monooxygenases ausB and ausC, and the dioxygenase ausE. Acid-catalyzed keto-rearrangement and ring contraction of the tetraketide portion of preaustinoid A3 by ausJ lead to the formation of preaustinoid A4. The aldo-keto reductase ausK, with the help of ausH, is involved in the next step by transforming preaustinoid A4 into isoaustinone which is in turn hydroxylated by the P450 monooxygenase ausI to form austinolide. The cytochrome P450 monooxygenase ausG modifies austinolide to austinol. Austinol is further acetylated to austin by the O-acetyltransferase ausP, which spontaneously changes to dehydroaustin. The cytochrome P450 monooxygenase ausR then converts dehydroaustin is into 7-dehydrodehydroaustin. The hydroxylation catalyzed by ausR permits the O-acetyltransferase ausQ to add an additional acetyl group to the molecule, leading to the formation of acetoxydehydroaustin. The short chain dehydrogenase ausT catalyzes the reduction of the double bond present between carbon atoms 1 and 2 to convert 7-dehydrodehydroaustin into 1,2-dihydro-7-hydroxydehydroaustin. AusQ catalyzes not only an acetylation reaction but also the addition of the PKS ausV diketide product to 1,2-dihydro-7-hydroxydehydroaustin, forming precalidodehydroaustin. Finally, the iron/alpha-ketoglutarate-dependent dioxygenase converts precalidodehydroaustin into calidodehydroaustin. The polypeptide is Austinoid biosynthesis cluster protein H (Aspergillus calidoustus).